A 227-amino-acid polypeptide reads, in one-letter code: Ribose-5-phosphate isomerase A (227 aa).

Substrate-binding positions include 26–29 (TGST), 82–85 (DGAD), and 95–98 (KGGG). Glutamate 104 functions as the Proton acceptor in the catalytic mechanism. Substrate is bound at residue lysine 122.

It belongs to the ribose 5-phosphate isomerase family. As to quaternary structure, homodimer.

It catalyses the reaction aldehydo-D-ribose 5-phosphate = D-ribulose 5-phosphate. It participates in carbohydrate degradation; pentose phosphate pathway; D-ribose 5-phosphate from D-ribulose 5-phosphate (non-oxidative stage): step 1/1. Its function is as follows. Catalyzes the reversible conversion of ribose-5-phosphate to ribulose 5-phosphate. In Streptococcus pneumoniae (strain Hungary19A-6), this protein is Ribose-5-phosphate isomerase A.